A 461-amino-acid polypeptide reads, in one-letter code: Coronin-1A (461 aa).

Ser2 bears the N-acetylserine mark. Ser2 is modified (phosphoserine; by PKC). 7 WD repeats span residues 13–63 (HVFG…LVLP), 73–110 (NVPL…MVWE), 123–160 (PVVT…LVWD), 164–204 (GAAV…RVIE), 207–251 (KGTV…ALWD), 258–296 (PLSL…RYFE), and 302–349 (PFLH…EPIA). The span at 407 to 418 (NRGLDSARRRAT) shows a compositional bias: basic and acidic residues. Positions 407 to 431 (NRGLDSARRRATPEPSSTLSSDTVS) are disordered. Ser412 bears the Phosphoserine; by PKC mark. Thr418 carries the post-translational modification Phosphothreonine. Residues 420 to 430 (EPSSTLSSDTV) show a composition bias toward polar residues. Ser422 bears the Phosphoserine mark. Residues 425-461 (LSSDTVSRLEEDVRNLNAIVQKLQERLDRLEETVQAK) adopt a coiled-coil conformation.

It belongs to the WD repeat coronin family. As to quaternary structure, binds actin. In terms of processing, phosphorylation at Ser-412 by PKC strongly down-regulates the association with actin. Polyubiquitinated by RNF128 with 'Lys-48'-linked chains, leading to proteasomal degradation.

It localises to the cytoplasm. The protein resides in the cytoskeleton. It is found in the cell cortex. Its subcellular location is the cytoplasmic vesicle. The protein localises to the phagosome membrane. Functionally, may be a crucial component of the cytoskeleton of highly motile cells, functioning both in the invagination of large pieces of plasma membrane, as well as in forming protrusions of the plasma membrane involved in cell locomotion. This chain is Coronin-1A (Coro1a), found in Rattus norvegicus (Rat).